Here is a 122-residue protein sequence, read N- to C-terminus: Large ribosomal subunit protein bL12 (122 aa).

A disordered region spans residues 94–122 (GNVKEGLSKEDAEEMKEKLEEAGATVELK). The span at 99–114 (GLSKEDAEEMKEKLEE) shows a compositional bias: basic and acidic residues.

This sequence belongs to the bacterial ribosomal protein bL12 family. As to quaternary structure, homodimer. Part of the ribosomal stalk of the 50S ribosomal subunit. Forms a multimeric L10(L12)X complex, where L10 forms an elongated spine to which 2 to 4 L12 dimers bind in a sequential fashion. Binds GTP-bound translation factors.

Functionally, forms part of the ribosomal stalk which helps the ribosome interact with GTP-bound translation factors. Is thus essential for accurate translation. The chain is Large ribosomal subunit protein bL12 from Halanaerobium praevalens.